Here is a 1172-residue protein sequence, read N- to C-terminus: DNA-directed RNA polymerase subunit beta (1172 aa).

Belongs to the RNA polymerase beta chain family. As to quaternary structure, the RNAP catalytic core consists of 2 alpha, 1 beta, 1 beta' and 1 omega subunit. When a sigma factor is associated with the core the holoenzyme is formed, which can initiate transcription.

The catalysed reaction is RNA(n) + a ribonucleoside 5'-triphosphate = RNA(n+1) + diphosphate. In terms of biological role, DNA-dependent RNA polymerase catalyzes the transcription of DNA into RNA using the four ribonucleoside triphosphates as substrates. The polypeptide is DNA-directed RNA polymerase subunit beta (Mycobacterium sp. (strain KMS)).